The primary structure comprises 562 residues: MELLRNLFEGYPNLWGGGVAHSVLILSLVIAFGIMLGKIKVAGISLGVTWILFVGIVFGHFNLNLNEHLLHFLKEFGLILFVYSIGLQVGPGFFSAFKKGGFTLNMLAMIVVFAGVIITLALHFITGIPITTMVGILSGAVTNTPGLGAAQQANSDLTGIDAPEIALGYAVAYPLGVVGCIMSLLGLKYLFRINTKQEEAEAEQGLGHLQELTVRPVSLEVRNEALHGKRIKDIRPLVNRNFVVSRIRHLNGKKESELVNSDTELHLGDEILVIATPIDIEAITAFFGKPIEVEWEQLNKELISRRILITKPELNGKTLAQLKIRNNFGASVTRVNRSGVDLVASPQLQLQMGDRVTIVGSELAVSHAEKVLGNSMKRLNHPNLIPIFLGIALGCILGSIPFMFPGIPQPVKLGLAGGPLIVSILISRFGPQYKLITYTTMSANLMIREIGISLFLACVGLGAGDGFVETIIHEGGYVWIAYGMIITIVPLLLAGFIGRYAFKLNYYTLIGVLAGSTTNPPALAYSNDLTSCDAPAVGYATVYPLTMFLRVLTAQLLILSLG.

The next 5 helical transmembrane spans lie at 15–34 (WGGG…AFGI), 41–63 (VAGI…HFNL), 78–97 (LILF…FSAF), 104–126 (LNML…HFIT), and 165–187 (IALG…LLGL). RCK C-terminal domains are found at residues 204–286 (QGLG…ITAF) and 289–374 (KPIE…VLGN). A run of 6 helical transmembrane segments spans residues 384–403 (LIPI…IPFM), 413–430 (LGLA…SRFG), 450–472 (IGIS…ETII), 476–498 (GYVW…GFIG), 505–524 (NYYT…PALA), and 539–561 (YATV…ILSL).

This sequence belongs to the AAE transporter (TC 2.A.81) family.

It is found in the cell membrane. This is an uncharacterized protein from Bacteroides fragilis (strain YCH46).